A 513-amino-acid chain; its full sequence is 2-isopropylmalate synthase (513 aa).

The Pyruvate carboxyltransferase domain maps to 5-268 (LIIFDTTLRD…DLRVDTSQIV (264 aa)). Residues D14, H202, H204, and N239 each coordinate Mn(2+). The segment at 394 to 513 (RLLALSQHSE…SKAERVAAQG (120 aa)) is regulatory domain.

The protein belongs to the alpha-IPM synthase/homocitrate synthase family. LeuA type 1 subfamily. Homodimer. The cofactor is Mn(2+).

Its subcellular location is the cytoplasm. It catalyses the reaction 3-methyl-2-oxobutanoate + acetyl-CoA + H2O = (2S)-2-isopropylmalate + CoA + H(+). It functions in the pathway amino-acid biosynthesis; L-leucine biosynthesis; L-leucine from 3-methyl-2-oxobutanoate: step 1/4. In terms of biological role, catalyzes the condensation of the acetyl group of acetyl-CoA with 3-methyl-2-oxobutanoate (2-ketoisovalerate) to form 3-carboxy-3-hydroxy-4-methylpentanoate (2-isopropylmalate). This Leptothrix cholodnii (strain ATCC 51168 / LMG 8142 / SP-6) (Leptothrix discophora (strain SP-6)) protein is 2-isopropylmalate synthase.